We begin with the raw amino-acid sequence, 384 residues long: Protein Brevis radix-like 4 (384 aa).

Disordered stretches follow at residues 1–35 (MLTC…SQLK) and 50–78 (PCTA…SDFE). The 56-residue stretch at 150–205 (KEWVAQVEPGVLITFVSLPGGGNDLKRIRFSRDMFNKLQAQRWWADNYDKVMELYN) folds into the BRX 1 domain. Disordered regions lie at residues 214-270 (FPLP…DHNS) and 304-325 (SIRS…SNAS). A compositionally biased stretch (basic and acidic residues) spans 221–235 (RSEDENAKVEYHPED). The segment covering 260–270 (YSSSDSLDHNS) has biased composition (polar residues). Residues 309-318 (SSRDADRSEE) are compositionally biased toward basic and acidic residues. One can recognise a BRX 2 domain in the interval 329-384 (NEWVEQDEPGVYITIKVLPGGKRELRRVRFSRERFGEMHARLWWEENRARIHEQYL).

Belongs to the BRX family. In terms of tissue distribution, expressed in roots.

The protein localises to the nucleus. This is Protein Brevis radix-like 4 (BRXL4) from Arabidopsis thaliana (Mouse-ear cress).